Reading from the N-terminus, the 446-residue chain is Glucarate dehydratase-related protein (446 aa).

4 residues coordinate substrate: H31, T104, Y149, and K204. K206 functions as the Proton acceptor in the catalytic mechanism. Mg(2+) contacts are provided by D234, E265, and N288. 234–236 (DPN) is a substrate binding site. Residues N288, 338 to 340 (HSN), H367, and R421 contribute to the substrate site. Residue H338 is the Proton acceptor of the active site.

The protein belongs to the mandelate racemase/muconate lactonizing enzyme family. GlucD subfamily. A divalent metal cation serves as cofactor.

Its function is as follows. Does not seem to have an in-vivo activity on glucarate or idarate. Its real substrate is unknown. In Escherichia coli (strain K12), this protein is Glucarate dehydratase-related protein (gudX).